A 548-amino-acid chain; its full sequence is Myrosinase (548 aa).

Positions 1 to 20 (MKLLHGLALVFLLAAASCKA) are cleaved as a signal peptide. Intrachain disulfides connect Cys26/Cys458, Cys34/Cys454, and Cys226/Cys236. Residue Gln59 participates in substrate binding. Positions 76 and 90 each coordinate Zn(2+). Asn110 carries N-linked (GlcNAc...) asparagine glycosylation. Substrate contacts are provided by His161 and Asn206. Gln207 is an L-ascorbate binding site. Asn240 carries an N-linked (GlcNAc...) asparagine glycan. L-ascorbate is bound at residue Arg281. Asn331 carries an N-linked (GlcNAc...) asparagine glycan. Position 352 (Tyr352) interacts with substrate. Catalysis depends on Glu429, which acts as the Nucleophile. Substrate-binding positions include Trp477 and 484-485 (EF). N-linked (GlcNAc...) asparagine glycosylation is present at Asn520.

Belongs to the glycosyl hydrolase 1 family. As to quaternary structure, homodimer. As to expression, in vacuoles called myrosin grains of a certain class of cells, myrosin cells, distributed in the cotyledons and the axis of the embryo as well as in different organs of the growing plant.

Its subcellular location is the vacuole. The catalysed reaction is a thioglucoside + H2O = a sugar + a thiol.. Functionally, degradation of glucosinolates (glucose residue linked by a thioglucoside bound to an amino acid derivative) to glucose, sulfate and any of the products: thiocyanates, isothiocyanates, nitriles, epithionitriles or oxazolidine-2-thiones. The chain is Myrosinase from Brassica napus (Rape).